The following is a 143-amino-acid chain: Large ribosomal subunit protein uL11 (143 aa).

The protein belongs to the universal ribosomal protein uL11 family. In terms of assembly, part of the ribosomal stalk of the 50S ribosomal subunit. Interacts with L10 and the large rRNA to form the base of the stalk. L10 forms an elongated spine to which L12 dimers bind in a sequential fashion forming a multimeric L10(L12)X complex. In terms of processing, one or more lysine residues are methylated.

Forms part of the ribosomal stalk which helps the ribosome interact with GTP-bound translation factors. The protein is Large ribosomal subunit protein uL11 of Methylibium petroleiphilum (strain ATCC BAA-1232 / LMG 22953 / PM1).